Here is a 451-residue protein sequence, read N- to C-terminus: Probable carboxypeptidase PMAA_093910 (451 aa).

The signal sequence occupies residues 1–19; that stretch reads MKVSSLLPSVLLLVGATRA. Asn149 carries N-linked (GlcNAc...) asparagine glycosylation. Asp171 is a binding site for Zn(2+). The Proton acceptor role is filled by Glu203. Residue Glu204 participates in Zn(2+) binding. Residue Asn354 is glycosylated (N-linked (GlcNAc...) asparagine).

It belongs to the peptidase M20A family. Zn(2+) serves as cofactor.

It is found in the secreted. In Talaromyces marneffei (strain ATCC 18224 / CBS 334.59 / QM 7333) (Penicillium marneffei), this protein is Probable carboxypeptidase PMAA_093910.